The following is a 188-amino-acid chain: Putative manganese efflux pump MntP (188 aa).

The next 6 membrane-spanning stretches (helical) occupy residues F3–A23, I35–V55, F63–M83, W104–F126, M140–F160, and A167–I187.

The protein belongs to the MntP (TC 9.B.29) family.

The protein resides in the cell inner membrane. Functionally, probably functions as a manganese efflux pump. This Neisseria meningitidis serogroup B (strain ATCC BAA-335 / MC58) protein is Putative manganese efflux pump MntP.